The following is a 330-amino-acid chain: Putative zinc finger protein CONSTANS-LIKE 11 (330 aa).

Zn(2+)-binding residues include C5, C8, C28, and H33. Residues 5-47 form a B box-type 1; atypical zinc finger; that stretch reads CDFCGTEKALIYCKSDSAKLCLNCDVNVHSANPLSQRHTRSLL. A B box-type 2; degenerate zinc finger spans residues 48 to 88; sequence CEKCSLQPTAVHCMNENVSLCQGCQWTASNCTGLGHRLQSL. The CCT domain occupies 276-318; sequence RDEAKKRYKQKKSKRMFGKQIRYASRKARADTRKRVKGRFVKS.

The protein belongs to the CONSTANS family.

It localises to the nucleus. This chain is Putative zinc finger protein CONSTANS-LIKE 11 (COL11), found in Arabidopsis thaliana (Mouse-ear cress).